We begin with the raw amino-acid sequence, 577 residues long: MQSTLLQTKPAFSWKALGWALLYFWFFSTLLQAIIYLTGYSGTNGLRDSLLYSSLWLIPVFLFPGRIRVIAAVIGVVLWAASLAALSYYVIYGQEFSQSVLFVMFETNANEASEYLSQYFSLKIVLVALAYTVAAILLWTRLRPVYIPSPWRYLVSFALLYGLILHPIAMNTFIKHKSMEKTLDSLASRMEPAAPWQFITGYYQYRLQLASLNKLLNENDALPPLANFQDHSGDAPRTLVLVIGESTQRGRMSLYGYPRETTPELDALHKTDPGLTVFNNVVTSRPYTIEILQQALTFADEKNPDWYLTKPSLMNMMKQAGYKTFWITNQQTMTARNTMLTVFSKQTDKQFYMNQQRTQSAREYDSNVLAPFKAVLADPAPKKFIIVHLLGTHIKYKFRYPENQGKFDGKTDHVPPGLSSDELESYNDYDNANLYNDYVVASLIKDYKATDPNGFLLYFSDHGEEVYDTPPHKTQGRNEDSPTRHMYTVPFLLWTSEKWQAAHPRDFSQDVDRKYSSSELIHTWSDLAGLTYDGYDPTRSITNPQFKETTRWIGNPYKKNALIDYDTLPYGDQVGNQ.

A run of 5 helical transmembrane segments spans residues 17–37 (LGWA…IIYL), 45–65 (GLRD…LFPG), 69–89 (VIAA…LSYY), 119–139 (YFSL…ILLW), and 154–174 (LVSF…NTFI).

It belongs to the phosphoethanolamine transferase family. EptC/CptA subfamily.

It localises to the cell inner membrane. The protein operates within bacterial outer membrane biogenesis; LPS core biosynthesis. Catalyzes the addition of a phosphoethanolamine moiety to the outer membrane lipopolysaccharide core. In Salmonella typhimurium (strain LT2 / SGSC1412 / ATCC 700720), this protein is Phosphoethanolamine transferase CptA (cptA).